A 943-amino-acid chain; its full sequence is Isoleucine--tRNA ligase (943 aa).

Residues 58–68 (PYANGSIHIGH) carry the 'HIGH' region motif. Glu567 is an L-isoleucyl-5'-AMP binding site. Positions 608-612 (KMSKS) match the 'KMSKS' region motif. Lys611 lines the ATP pocket. Zn(2+)-binding residues include Cys906, Cys909, Cys926, and Cys929.

It belongs to the class-I aminoacyl-tRNA synthetase family. IleS type 1 subfamily. As to quaternary structure, monomer. It depends on Zn(2+) as a cofactor.

It is found in the cytoplasm. It catalyses the reaction tRNA(Ile) + L-isoleucine + ATP = L-isoleucyl-tRNA(Ile) + AMP + diphosphate. Its function is as follows. Catalyzes the attachment of isoleucine to tRNA(Ile). As IleRS can inadvertently accommodate and process structurally similar amino acids such as valine, to avoid such errors it has two additional distinct tRNA(Ile)-dependent editing activities. One activity is designated as 'pretransfer' editing and involves the hydrolysis of activated Val-AMP. The other activity is designated 'posttransfer' editing and involves deacylation of mischarged Val-tRNA(Ile). The protein is Isoleucine--tRNA ligase of Ectopseudomonas mendocina (strain ymp) (Pseudomonas mendocina).